Consider the following 238-residue polypeptide: Large ribosomal subunit protein uL2 (238 aa).

A disordered region spans residues 199–238 (PHGGGLHQSVSRSSTVARNTPPGRKVGHIAARRTGRRDRK). The span at 206–216 (QSVSRSSTVAR) shows a compositional bias: polar residues. A compositionally biased stretch (basic residues) spans 223 to 238 (KVGHIAARRTGRRDRK).

The protein belongs to the universal ribosomal protein uL2 family. In terms of assembly, part of the 50S ribosomal subunit. Forms a bridge to the 30S subunit in the 70S ribosome.

Functionally, one of the primary rRNA binding proteins. Required for association of the 30S and 50S subunits to form the 70S ribosome, for tRNA binding and peptide bond formation. It has been suggested to have peptidyltransferase activity; this is somewhat controversial. Makes several contacts with the 16S rRNA in the 70S ribosome. The sequence is that of Large ribosomal subunit protein uL2 from Metallosphaera sedula (strain ATCC 51363 / DSM 5348 / JCM 9185 / NBRC 15509 / TH2).